A 216-amino-acid polypeptide reads, in one-letter code: Protein-L-isoaspartate O-methyltransferase (216 aa).

S61 is a catalytic residue.

This sequence belongs to the methyltransferase superfamily. L-isoaspartyl/D-aspartyl protein methyltransferase family.

The protein resides in the cytoplasm. It carries out the reaction [protein]-L-isoaspartate + S-adenosyl-L-methionine = [protein]-L-isoaspartate alpha-methyl ester + S-adenosyl-L-homocysteine. Its function is as follows. Catalyzes the methyl esterification of L-isoaspartyl residues in peptides and proteins that result from spontaneous decomposition of normal L-aspartyl and L-asparaginyl residues. It plays a role in the repair and/or degradation of damaged proteins. The polypeptide is Protein-L-isoaspartate O-methyltransferase (Dinoroseobacter shibae (strain DSM 16493 / NCIMB 14021 / DFL 12)).